Here is a 68-residue protein sequence, read N- to C-terminus: Large ribosomal subunit protein bL33c (68 aa).

The protein belongs to the bacterial ribosomal protein bL33 family.

It is found in the plastid. The protein localises to the chloroplast. The polypeptide is Large ribosomal subunit protein bL33c (Piper cenocladum (Ant piper)).